We begin with the raw amino-acid sequence, 353 residues long: GDP-mannose transporter (353 aa).

The Cytoplasmic portion of the chain corresponds to 1 to 31 (MGLLLSYLFGYIFYSVNKKFHIMEKFGASNS). A helical membrane pass occupies residues 32–52 (IVNNGPVSIFAYCASSILMTV). Over 53–66 (TNKFVVGAYEFNLN) the chain is Lumenal. Residues 67–87 (FFLLAVQAAVCLVTIATLKGL) traverse the membrane as a helical segment. The Cytoplasmic segment spans residues 88–102 (GIITYRQFNKDEAKK). Residues 103–122 (WFPIAFLLVLMIYTSSKALQ) traverse the membrane as a helical segment. Topologically, residues 123-125 (YLS) are lumenal. Residues 126–148 (IPVYTIFKNLTIILIAYGEVIWF) traverse the membrane as a helical segment. Residues 149–154 (GGKVTT) are Cytoplasmic-facing. Residues 155–172 (MALGSFILMVLSSVIAYY) form a helical membrane-spanning segment. Residues 173-187 (GDTAETGEKTAEMHL) are Lumenal-facing. The helical transmembrane segment at 188–208 (LYLGYAWMFTNCFSSAAFVLI) threads the bilayer. Topologically, residues 209–227 (MRKRIKLTNFKDFDTMYYN) are cytoplasmic. A helical membrane pass occupies residues 228–248 (NLLSLPLLLVFSFLFEDWSSV). Residues 249-262 (NLNKNFPPDNRNTT) are Lumenal-facing. N-linked (GlcNAc...) asparagine glycosylation is present at Asn-260. The chain crosses the membrane as a helical span at residues 263-283 (IFVMILSGASSVGISYCSAWC). Residues 284 to 290 (VRVTSST) lie on the Cytoplasmic side of the membrane. The chain crosses the membrane as a helical span at residues 291–313 (TYSMVGALNKLPIALSGLVFFNA). At 314 to 316 (AVN) the chain is on the lumenal side. Residues 317-336 (FWSVSSIFVGFLAGVFYAVA) form a helical membrane-spanning segment. Residues 337-353 (KQKQQKENAQQLPVANK) lie on the Cytoplasmic side of the membrane.

Belongs to the TPT transporter family. SLC35D subfamily. In terms of assembly, homooligomer.

Its subcellular location is the golgi apparatus membrane. It is found in the cytoplasmic vesicle membrane. The protein resides in the endoplasmic reticulum membrane. Involved in the import of GDP-mannose from the cytoplasm into the Golgi lumen. The chain is GDP-mannose transporter (VRG4) from Meyerozyma guilliermondii (strain ATCC 6260 / CBS 566 / DSM 6381 / JCM 1539 / NBRC 10279 / NRRL Y-324) (Yeast).